Consider the following 744-residue polypeptide: Elongation factor G, mitochondrial (744 aa).

A tr-type G domain is found at 39–316; sequence EKIRNIGISA…AVIDYLPNPG (278 aa). GTP-binding positions include 48–55, 115–119, and 169–172; these read AHIDSGKT, DTPGH, and NKLD. A compositionally biased stretch (polar residues) spans 725–735; that stretch reads VRQYQETQGAS. The segment at 725–744 is disordered; sequence VRQYQETQGASQPDKKKKKN.

The protein belongs to the TRAFAC class translation factor GTPase superfamily. Classic translation factor GTPase family. EF-G/EF-2 subfamily.

It is found in the mitochondrion. The protein operates within protein biosynthesis; polypeptide chain elongation. Mitochondrial GTPase that catalyzes the GTP-dependent ribosomal translocation step during translation elongation. During this step, the ribosome changes from the pre-translocational (PRE) to the post-translocational (POST) state as the newly formed A-site-bound peptidyl-tRNA and P-site-bound deacylated tRNA move to the P and E sites, respectively. Catalyzes the coordinated movement of the two tRNA molecules, the mRNA and conformational changes in the ribosome. Essential during development as it acts as a retrograde signal from mitochondria to the nucleus to slow down cell proliferation if mitochondrial energy output is low. In Drosophila pseudoobscura pseudoobscura (Fruit fly), this protein is Elongation factor G, mitochondrial.